A 447-amino-acid chain; its full sequence is Methionine aminopeptidase 2-2 (447 aa).

A disordered region spans residues 1–89; the sequence is MAAQTAPELA…PRIPLTTLFP (89 aa). The segment covering 15–30 has biased composition (polar residues); the sequence is NKNSGSAEANVVSNGG. The segment covering 34–47 has biased composition (acidic residues); sequence DDAENEGDSDDDKD. The span at 59–73 shows a compositional bias: basic residues; that stretch reads KKKKKKRSKKKKKAA. Histidine 197 provides a ligand contact to substrate. Residues aspartate 217, aspartate 228, and histidine 297 each contribute to the a divalent metal cation site. Histidine 305 is a binding site for substrate. A divalent metal cation is bound by residues glutamate 333 and glutamate 428.

The protein belongs to the peptidase M24A family. Methionine aminopeptidase eukaryotic type 2 subfamily. It depends on Co(2+) as a cofactor. Requires Zn(2+) as cofactor. The cofactor is Mn(2+). Fe(2+) is required as a cofactor.

The protein resides in the cytoplasm. It carries out the reaction Release of N-terminal amino acids, preferentially methionine, from peptides and arylamides.. Its function is as follows. Cotranslationally removes the N-terminal methionine from nascent proteins. The N-terminal methionine is often cleaved when the second residue in the primary sequence is small and uncharged (Met-Ala-, Cys, Gly, Pro, Ser, Thr, or Val). The protein is Methionine aminopeptidase 2-2 of Arthroderma otae (strain ATCC MYA-4605 / CBS 113480) (Microsporum canis).